The primary structure comprises 135 residues: P2Y purinoceptor 4 (135 aa).

The chain crosses the membrane as a helical span at residues 1–25; it reads VHFSSSVMVLLFGLPFLVTLVCYGL. Topologically, residues 26 to 49 are cytoplasmic; sequence MALRLCRPLPGAGQSSSRLRSLRT. The helical transmembrane segment at 50–72 threads the bilayer; it reads IAVVMTVFAVCLVPFHITRTIYY. Residues 73-90 lie on the Extracellular side of the membrane; that stretch reads LARLLKADCQILNIVNVV. A helical transmembrane segment spans residues 91-112; the sequence is YKVTRPLASANSCLDPLLYLFT. The Cytoplasmic portion of the chain corresponds to 113 to 135; it reads GDKYRHQLQRLCRVSAPQRRITA.

It belongs to the G-protein coupled receptor 1 family. In terms of tissue distribution, expressed in brain, heart, stria vascularis and vestibular labyrinth.

The protein resides in the cell membrane. Receptor for ATP and UTP coupled to G-proteins that activate a phosphatidylinositol-calcium second messenger system. Not activated by UDP. In Meriones unguiculatus (Mongolian jird), this protein is P2Y purinoceptor 4 (P2RY4).